The primary structure comprises 183 residues: Oleosin 5 (183 aa).

The interval 1 to 39 (MADVRTHSHQLQVHPQRQHEGGIKVLYPQSGPSSTQVLA) is polar. 3 consecutive transmembrane segments (helical) span residues 37 to 57 (VLAV…AGLT), 66 to 86 (MLAF…AFVI), and 87 to 107 (GLAM…LSSM). Positions 40–113 (VFVGVPIGGT…LSSMSWVLNY (74 aa)) are hydrophobic. The disordered stretch occupies residues 144–183 (KDAGQTIEDKAHDVREAKTFDVRDRDTTKGTHNVRDTKTT).

Belongs to the oleosin family.

The protein resides in the lipid droplet. Its subcellular location is the membrane. In terms of biological role, may have a structural role to stabilize the lipid body during desiccation of the seed by preventing coalescence of the oil. Probably interacts with both lipid and phospholipid moieties of lipid bodies. May also provide recognition signals for specific lipase anchorage in lipolysis during seedling growth. This is Oleosin 5 from Arabidopsis thaliana (Mouse-ear cress).